The chain runs to 148 residues: UPF0260 protein Sfri_1740 (148 aa).

Belongs to the UPF0260 family.

This is UPF0260 protein Sfri_1740 from Shewanella frigidimarina (strain NCIMB 400).